The chain runs to 108 residues: Insulin (108 aa).

The signal sequence occupies residues 1 to 24 (MALWTRLLPLLALLALWAPAPAQA). Intrachain disulfides connect cysteine 31–cysteine 94, cysteine 43–cysteine 107, and cysteine 93–cysteine 98. Residues 57–85 (EAENPQAGAVELGGGLGGLQALALEGPPQ) constitute a propeptide, c peptide.

This sequence belongs to the insulin family. As to quaternary structure, heterodimer of a B chain and an A chain linked by two disulfide bonds.

It is found in the secreted. Insulin decreases blood glucose concentration. It increases cell permeability to monosaccharides, amino acids and fatty acids. It accelerates glycolysis, the pentose phosphate cycle, and glycogen synthesis in liver. This is Insulin (INS) from Sus scrofa (Pig).